The primary structure comprises 236 residues: Ribose-5-phosphate isomerase A (236 aa).

Substrate contacts are provided by residues 28 to 31, 83 to 86, and 96 to 99; these read TGST, DGAD, and KGGG. Glu105 (proton acceptor) is an active-site residue. Lys123 is a binding site for substrate.

Belongs to the ribose 5-phosphate isomerase family. Homodimer.

The catalysed reaction is aldehydo-D-ribose 5-phosphate = D-ribulose 5-phosphate. The protein operates within carbohydrate degradation; pentose phosphate pathway; D-ribose 5-phosphate from D-ribulose 5-phosphate (non-oxidative stage): step 1/1. Catalyzes the reversible conversion of ribose-5-phosphate to ribulose 5-phosphate. The chain is Ribose-5-phosphate isomerase A from Methylorubrum populi (strain ATCC BAA-705 / NCIMB 13946 / BJ001) (Methylobacterium populi).